A 293-amino-acid chain; its full sequence is Pantothenate synthetase (293 aa).

An ATP-binding site is contributed by 30 to 37 (MGYLHKGH). The active-site Proton donor is His-37. A (R)-pantoate-binding site is contributed by Gln-61. Gln-61 is a beta-alanine binding site. Residue 147–150 (GEKD) coordinates ATP. Gln-153 lines the (R)-pantoate pocket. ATP-binding positions include Val-176 and 184-187 (CSSR).

Belongs to the pantothenate synthetase family. As to quaternary structure, homodimer.

It is found in the cytoplasm. The enzyme catalyses (R)-pantoate + beta-alanine + ATP = (R)-pantothenate + AMP + diphosphate + H(+). It participates in cofactor biosynthesis; (R)-pantothenate biosynthesis; (R)-pantothenate from (R)-pantoate and beta-alanine: step 1/1. In terms of biological role, catalyzes the condensation of pantoate with beta-alanine in an ATP-dependent reaction via a pantoyl-adenylate intermediate. The chain is Pantothenate synthetase from Brucella abortus (strain S19).